A 267-amino-acid polypeptide reads, in one-letter code: Membrane-spanning 4-domains subfamily A member 10 (267 aa).

Residues 1 to 61 are Cytoplasmic-facing; that stretch reads MKAEATVIPS…KKSSLLKELG (61 aa). The helical transmembrane segment at 62 to 82 threads the bilayer; sequence AFHITIALLHLVFGGYLASIV. Topologically, residues 83–91 are extracellular; it reads KNLHLVVLK. The helical transmembrane segment at 92 to 112 threads the bilayer; the sequence is SWYPFWGAASFLISGILAITM. The Cytoplasmic portion of the chain corresponds to 113 to 121; that stretch reads KTFSKTYLK. Residues 122–142 traverse the membrane as a helical segment; sequence MLCLMTNLISLFCVLSGLFVI. Topologically, residues 143-171 are extracellular; it reads SKDLFLESPFESPIWRMYPNSTVHIQRLE. Residues 172 to 192 traverse the membrane as a helical segment; it reads LALLCFTVLELFLPVPTAVTA. Residues 193-267 are Cytoplasmic-facing; that stretch reads WRGDCPSAKN…GAAIWTQTAN (75 aa).

This sequence belongs to the MS4A family.

Its subcellular location is the membrane. Its function is as follows. May be involved in signal transduction as a component of a multimeric receptor complex. The protein is Membrane-spanning 4-domains subfamily A member 10 (MS4A10) of Homo sapiens (Human).